The chain runs to 393 residues: Probable tRNA sulfurtransferase (393 aa).

One can recognise a THUMP domain in the interval 61–168 (DEVIESLTRV…GDVINIYSIE (108 aa)). ATP is bound by residues 186–187 (LL), 211–212 (YF), R268, G290, and Q299.

This sequence belongs to the ThiI family.

It localises to the cytoplasm. It catalyses the reaction [ThiI sulfur-carrier protein]-S-sulfanyl-L-cysteine + a uridine in tRNA + 2 reduced [2Fe-2S]-[ferredoxin] + ATP + H(+) = [ThiI sulfur-carrier protein]-L-cysteine + a 4-thiouridine in tRNA + 2 oxidized [2Fe-2S]-[ferredoxin] + AMP + diphosphate. The enzyme catalyses [ThiS sulfur-carrier protein]-C-terminal Gly-Gly-AMP + S-sulfanyl-L-cysteinyl-[cysteine desulfurase] + AH2 = [ThiS sulfur-carrier protein]-C-terminal-Gly-aminoethanethioate + L-cysteinyl-[cysteine desulfurase] + A + AMP + 2 H(+). It functions in the pathway cofactor biosynthesis; thiamine diphosphate biosynthesis. Functionally, catalyzes the ATP-dependent transfer of a sulfur to tRNA to produce 4-thiouridine in position 8 of tRNAs, which functions as a near-UV photosensor. Also catalyzes the transfer of sulfur to the sulfur carrier protein ThiS, forming ThiS-thiocarboxylate. This is a step in the synthesis of thiazole, in the thiamine biosynthesis pathway. The sulfur is donated as persulfide by IscS. The chain is Probable tRNA sulfurtransferase from Lachnospira eligens (strain ATCC 27750 / DSM 3376 / VPI C15-48 / C15-B4) (Eubacterium eligens).